Consider the following 94-residue polypeptide: Small ribosomal subunit protein uS19 (94 aa).

The protein belongs to the universal ribosomal protein uS19 family.

Protein S19 forms a complex with S13 that binds strongly to the 16S ribosomal RNA. The polypeptide is Small ribosomal subunit protein uS19 (Caldicellulosiruptor saccharolyticus (strain ATCC 43494 / DSM 8903 / Tp8T 6331)).